We begin with the raw amino-acid sequence, 394 residues long: Autophagy-related protein 18 (394 aa).

A WD 1 repeat occupies 4–42; sequence LSNTKLNYVTFNQDHSCLAVATSRGFRIYHTDPFSKIFN. Residues 146-165 are disordered; it reads MPKPREDQGERRPAHAPPLS. Over residues 148 to 158 the composition is skewed to basic and acidic residues; it reads KPREDQGERRP. 2 WD repeats span residues 191-231 and 236-275; these read AHKM…KLFE and TIPS…NANA. The L/FRRG motif motif lies at 232-236; sequence FRRGT. The tract at residues 274 to 342 is disordered; that stretch reads NAGGAGPAAL…QSGTFGSMLR (69 aa). Positions 302-312 are enriched in low complexity; sequence GSEYSPSGDSD. Residues 331-342 are compositionally biased toward polar residues; the sequence is RRQSGTFGSMLR.

The protein belongs to the WD repeat PROPPIN family. As to quaternary structure, component of the PI(3,5)P2 regulatory complex.

It is found in the preautophagosomal structure membrane. It localises to the vacuole membrane. The protein localises to the endosome membrane. Its function is as follows. The PI(3,5)P2 regulatory complex regulates both the synthesis and turnover of phosphatidylinositol 3,5-bisphosphate (PtdIns(3,5)P2). Necessary for proper vacuole morphology. Plays an important role in osmotically-induced vacuole fragmentation. Required for cytoplasm to vacuole transport (Cvt) vesicle formation, pexophagy and starvation-induced autophagy. Involved in correct ATG9 trafficking to the pre-autophagosomal structure. Might also be involved in premeiotic DNA replication. The sequence is that of Autophagy-related protein 18 (ATG18) from Chaetomium globosum (strain ATCC 6205 / CBS 148.51 / DSM 1962 / NBRC 6347 / NRRL 1970) (Soil fungus).